A 1001-amino-acid chain; its full sequence is Copper-transporting ATPase RAN1 (1001 aa).

Residues 1-21 (MAPSRRDLQLTPVTGGSSSQI) form a disordered region. Residues 1-298 (MAPSRRDLQL…TGEASNMFRR (298 aa)) lie on the Cytoplasmic side of the membrane. Over residues 11-21 (TPVTGGSSSQI) the composition is skewed to polar residues. HMA domains are found at residues 56–122 (RKIQ…FEAE) and 133–199 (LVGQ…FEGS). The Cu(+) site is built by Cys67, Cys70, Cys144, and Cys147. An HMA 3; degenerate domain is found at 207–273 (DKLVLRVDGI…GIEEDGFGKF (67 aa)). A helical transmembrane segment spans residues 299-320 (FISSLVLSIPLFFIQVICPHIA). At 321-338 (LFDALLVWRCGPFMMGDW) the chain is on the extracellular side. Residues 339 to 358 (LKWALVSVIQFVIGKRFYVA) form a helical membrane-spanning segment. The Cytoplasmic portion of the chain corresponds to 359-365 (AWRALRN). The chain crosses the membrane as a helical span at residues 366–386 (GSTNMDVLVALGTSASYFYSV). The Extracellular segment spans residues 387-403 (GALLYGAVTGFWSPTYF). The helical transmembrane segment at 404–424 (DASAMLITFVLLGKYLESLAK) threads the bilayer. Residues 425–558 (GKTSDAMKKL…KAPIQKFADY (134 aa)) are Cytoplasmic-facing. Residues 559–581 (VASIFVPVVITLALFTLVGWSIG) form a helical membrane-spanning segment. The Extracellular segment spans residues 582–602 (GAVGAYPDEWLPENGTHFVFS). The helical transmembrane segment at 603–620 (LMFSISVVVIACPCALGL) threads the bilayer. Residues 621-931 (ATPTAVMVAT…DLSRKTLTRI (311 aa)) lie on the Cytoplasmic side of the membrane. Asp658 serves as the catalytic 4-aspartylphosphate intermediate. Mg(2+) is bound by residues Asp877 and Asp881. The helical transmembrane segment at 932 to 951 (RLNYVFAMAYNVVSIPIAAG) threads the bilayer. At 952–963 (VFFPVLRVQLPP) the chain is on the extracellular side. The helical transmembrane segment at 964–982 (WAAGACMALSSVSVVCSSL) threads the bilayer. The Cytoplasmic segment spans residues 983–1001 (LLRRYKKPRLTTVLKITTE).

This sequence belongs to the cation transport ATPase (P-type) (TC 3.A.3) family. Type IB subfamily.

It localises to the membrane. The enzyme catalyses Cu(+)(in) + ATP + H2O = Cu(+)(out) + ADP + phosphate + H(+). Its function is as follows. Involved in copper import into the cell. Essential for ethylene signaling, which requires copper. Acts by delivering copper to create functional hormone receptors. The polypeptide is Copper-transporting ATPase RAN1 (RAN1) (Arabidopsis thaliana (Mouse-ear cress)).